We begin with the raw amino-acid sequence, 400 residues long: Bifunctional enzyme IspD/IspF (400 aa).

Residues 1–235 (MSLWTVLLAA…LAEAAAPPVP (235 aa)) are 2-C-methyl-D-erythritol 4-phosphate cytidylyltransferase. Residues 236–400 (VTGYGYDVHR…VALVSGWRRP (165 aa)) are 2-C-methyl-D-erythritol 2,4-cyclodiphosphate synthase. A divalent metal cation contacts are provided by D242 and H244. 4-CDP-2-C-methyl-D-erythritol 2-phosphate contacts are provided by residues 242-244 (DVH) and 276-277 (HS). Residue H284 coordinates a divalent metal cation. 4-CDP-2-C-methyl-D-erythritol 2-phosphate-binding positions include 298–300 (DIG), 303–307 (FPDSN), 374–377 (TTEE), and F381.

In the N-terminal section; belongs to the IspD/TarI cytidylyltransferase family. IspD subfamily. It in the C-terminal section; belongs to the IspF family. A divalent metal cation serves as cofactor.

It catalyses the reaction 2-C-methyl-D-erythritol 4-phosphate + CTP + H(+) = 4-CDP-2-C-methyl-D-erythritol + diphosphate. The catalysed reaction is 4-CDP-2-C-methyl-D-erythritol 2-phosphate = 2-C-methyl-D-erythritol 2,4-cyclic diphosphate + CMP. The protein operates within isoprenoid biosynthesis; isopentenyl diphosphate biosynthesis via DXP pathway; isopentenyl diphosphate from 1-deoxy-D-xylulose 5-phosphate: step 2/6. It functions in the pathway isoprenoid biosynthesis; isopentenyl diphosphate biosynthesis via DXP pathway; isopentenyl diphosphate from 1-deoxy-D-xylulose 5-phosphate: step 4/6. Bifunctional enzyme that catalyzes the formation of 4-diphosphocytidyl-2-C-methyl-D-erythritol from CTP and 2-C-methyl-D-erythritol 4-phosphate (MEP) (IspD), and catalyzes the conversion of 4-diphosphocytidyl-2-C-methyl-D-erythritol 2-phosphate (CDP-ME2P) to 2-C-methyl-D-erythritol 2,4-cyclodiphosphate (ME-CPP) with a corresponding release of cytidine 5-monophosphate (CMP) (IspF). This chain is Bifunctional enzyme IspD/IspF, found in Solidesulfovibrio magneticus (strain ATCC 700980 / DSM 13731 / RS-1) (Desulfovibrio magneticus).